A 1358-amino-acid polypeptide reads, in one-letter code: DNA-directed RNA polymerase subunit beta (1358 aa).

This sequence belongs to the RNA polymerase beta chain family. In terms of assembly, the RNAP catalytic core consists of 2 alpha, 1 beta, 1 beta' and 1 omega subunit. When a sigma factor is associated with the core the holoenzyme is formed, which can initiate transcription.

It catalyses the reaction RNA(n) + a ribonucleoside 5'-triphosphate = RNA(n+1) + diphosphate. DNA-dependent RNA polymerase catalyzes the transcription of DNA into RNA using the four ribonucleoside triphosphates as substrates. The sequence is that of DNA-directed RNA polymerase subunit beta from Francisella tularensis subsp. novicida (strain U112).